The sequence spans 221 residues: DNA mismatch repair protein MutH (221 aa).

This sequence belongs to the MutH family.

Its subcellular location is the cytoplasm. Its function is as follows. Sequence-specific endonuclease that cleaves unmethylated GATC sequences. It is involved in DNA mismatch repair. The protein is DNA mismatch repair protein MutH of Vibrio cholerae serotype O1 (strain ATCC 39315 / El Tor Inaba N16961).